A 421-amino-acid chain; its full sequence is Protein OS-9 homolog (421 aa).

Positions M1 to T26 are cleaved as a signal peptide. One can recognise an MRH domain in the interval E99–L220. An a mannooligosaccharide derivative-binding site is contributed by W115. A glycan (N-linked (GlcNAc...) asparagine) is linked at N125. Intrachain disulfides connect C173–C206 and C188–C218. Residues R180, E202, and Y208 each coordinate a mannooligosaccharide derivative. N271 and N332 each carry an N-linked (GlcNAc...) asparagine glycan. Over residues G375 to E394 the composition is skewed to acidic residues. The segment at G375 to A403 is disordered.

Belongs to the OS-9 family. In terms of assembly, interacts with missfolded ER lumenal proteins.

The protein localises to the endoplasmic reticulum membrane. Lectin involved in the quality control of the secretory pathway. As a member of the endoplasmic reticulum-associated degradation lumenal (ERAD-L) surveillance system, targets misfolded endoplasmic reticulum lumenal glycoproteins for degradation. In Eremothecium gossypii (strain ATCC 10895 / CBS 109.51 / FGSC 9923 / NRRL Y-1056) (Yeast), this protein is Protein OS-9 homolog (YOS9).